The primary structure comprises 67 residues: Large ribosomal subunit protein bL35 (67 aa).

The protein belongs to the bacterial ribosomal protein bL35 family.

This chain is Large ribosomal subunit protein bL35, found in Gloeothece citriformis (strain PCC 7424) (Cyanothece sp. (strain PCC 7424)).